The sequence spans 403 residues: Fasciclin-like arabinogalactan protein 2 (403 aa).

The N-terminal stretch at 1-26 is a signal peptide; that stretch reads MAYLRRAATALVLIFQLHLFLSLSNA. 2 consecutive FAS1 domains span residues 27–174 and 187–326; these read HNIT…SQVL and SDLI…DKVL. 4 N-linked (GlcNAc...) asparagine glycosylation sites follow: Asn-28, Asn-130, Asn-164, and Asn-248. The segment at 338–371 is disordered; that stretch reads SAPAPKSSKKKPKNAEADADGPSADAPSDDDVEV. Ala-378 carries GPI-anchor amidated alanine lipidation. Positions 379-403 are cleaved as a propeptide — removed in mature form; that stretch reads VSAMITRTSNVVTAIVGLCFGVWLM.

It belongs to the fasciclin-like AGP family. As to expression, expressed mainly in flowers and to a lesser extent in leaves and roots.

Its subcellular location is the cell membrane. May be a cell surface adhesion protein. The polypeptide is Fasciclin-like arabinogalactan protein 2 (FLA2) (Arabidopsis thaliana (Mouse-ear cress)).